Reading from the N-terminus, the 184-residue chain is TNPVLDVDGNELQRGQLYYATSVMRPGGGLTLAAPKGSCPLNVAQAPFDEYSGRPLAFFPENADDDTVQEGSTLYIMFPEPTRCPQSTVWTFDREAGFVTTGGTTSKAIGPHNSRFAIRKAGDASSQPRDYQIEVCPCSTGVERPSCRMGCLGTLGLAEGGKNVLLNINNESPHTIRFVKVKEG.

Disulfide bonds link cysteine 39–cysteine 84 and cysteine 136–cysteine 147.

Belongs to the protease inhibitor I3 (leguminous Kunitz-type inhibitor) family. In terms of assembly, homodimer.

Functionally, inhibits trypsin and alpha-chymotrypsin. This is Trypsin/chymotrypsin inhibitor from Alocasia macrorrhizos (Giant taro).